Here is a 473-residue protein sequence, read N- to C-terminus: MAPPAARLALLSAAALTLAARPAPGPRSGPECFTANGADYRGTQSWTALQGGKPCLFWNETFQHPYNTLKYPNGEGGLGEHNYCRNPDGDVSPWCYVAEHEDGVYWKYCEIPACQMPGNLGCYKDHGNPPPLTGTSKTSNKLTIQTCISFCRSQRFKFAGMESGYACFCGNNPDYWKHGEAASTECNSVCFGDHTQPCGGDGRIILFDTLVGACGGNYSAMAAVVYSPDFPDTYATGRVCYWTIRVPGASRIHFNFTLFDIRDSADMVELLDGYTHRVLVRLSGRSRPPLSFNVSLDFVILYFFSDRINQAQGFAVLYQATKEEPPQERPAVNQTLAEVITEQANLSVSAAHSSKVLYVITPSPSHPPQTAPGSHSWAPSVGANSHRVEGWTVYGLATLLILTVTAVVAKILLHVTFKSHRVPASGDLRDCRQPGASGDIWTIFYEPSTTISIFKKKLKGQSQQDDRNPLVSD.

The first 19 residues, 1-19 (MAPPAARLALLSAAALTLA), serve as a signal peptide directing secretion. Residues 21 to 392 (RPAPGPRSGP…ANSHRVEGWT (372 aa)) lie on the Extracellular side of the membrane. One can recognise a Kringle domain in the interval 31-114 (ECFTANGADY…YWKYCEIPAC (84 aa)). Disulfide bonds link cysteine 32–cysteine 114, cysteine 55–cysteine 95, cysteine 84–cysteine 109, cysteine 122–cysteine 186, cysteine 147–cysteine 167, cysteine 151–cysteine 169, cysteine 190–cysteine 198, and cysteine 214–cysteine 240. N-linked (GlcNAc...) asparagine glycosylation is present at asparagine 59. In terms of domain architecture, WSC spans 116–210 (MPGNLGCYKD…DGRIILFDTL (95 aa)). The CUB domain occupies 214 to 321 (CGGNYSAMAA…QGFAVLYQAT (108 aa)). 5 N-linked (GlcNAc...) asparagine glycosylation sites follow: asparagine 217, asparagine 255, asparagine 293, asparagine 333, and asparagine 345. The chain crosses the membrane as a helical span at residues 393–413 (VYGLATLLILTVTAVVAKILL). The Cytoplasmic segment spans residues 414–473 (HVTFKSHRVPASGDLRDCRQPGASGDIWTIFYEPSTTISIFKKKLKGQSQQDDRNPLVSD). Residues 414–473 (HVTFKSHRVPASGDLRDCRQPGASGDIWTIFYEPSTTISIFKKKLKGQSQQDDRNPLVSD) are essential for apoptotic activity.

In terms of assembly, forms a ternary complex with DKK1 and LRP6. Interacts with LRP6 in a DKK1-dependent manner. Interacts with DKK1 and RSPO1 (via FU repeats). In terms of tissue distribution, in the adult, widely expressed with high levels in heart, lung, kidney, skeletal muscle and testis.

It localises to the cell membrane. Functionally, receptor for Dickkopf proteins. Cooperates with DKK1/2 to inhibit Wnt/beta-catenin signaling by promoting the endocytosis of Wnt receptors LRP5 and LRP6. In the absence of DKK1, potentiates Wnt-beta-catenin signaling by maintaining LRP5 or LRP6 at the cell membrane. Can trigger apoptosis in a Wnt-independent manner and this apoptotic activity is inhibited upon binding of the ligand DKK1. Plays a role in limb development; attenuates Wnt signaling in the developing limb to allow normal limb patterning and can also negatively regulate bone formation. Modulates cell fate decisions in the developing cochlea with an inhibitory role in hair cell fate specification. This is Kremen protein 1 (Kremen1) from Mus musculus (Mouse).